Reading from the N-terminus, the 195-residue chain is MNTHEVEELRQKLLEDARKKSEEIIREAEREAERIIEEAERKWREKAEQEREKIITNARLEAQKIISEARRNYRITISKAKAEVINKILEEAKIRLTNRIGFDIEESLKKLLDEALYYIENPSKIIINPRDRDFIKKVLKEKGLKNIEIVESDNILGGLIIESIDGERVDNSYNTRLERAKSIVLAELNIILWGK.

This sequence belongs to the V-ATPase E subunit family. In terms of assembly, has multiple subunits with at least A(3), B(3), C, D, E, F, H, I and proteolipid K(x).

The protein resides in the cell membrane. In terms of biological role, component of the A-type ATP synthase that produces ATP from ADP in the presence of a proton gradient across the membrane. This Staphylothermus marinus (strain ATCC 43588 / DSM 3639 / JCM 9404 / F1) protein is A-type ATP synthase subunit E.